We begin with the raw amino-acid sequence, 1413 residues long: DNA-directed RNA polymerase subunit beta' (1413 aa).

Positions 70, 72, 85, and 88 each coordinate Zn(2+). Mg(2+) is bound by residues aspartate 460, aspartate 462, and aspartate 464. Zn(2+)-binding residues include cysteine 819, cysteine 893, cysteine 900, and cysteine 903. A disordered region spans residues 1393-1413 (EAFEFGTPETPAAEQTPHTNE).

Belongs to the RNA polymerase beta' chain family. In terms of assembly, the RNAP catalytic core consists of 2 alpha, 1 beta, 1 beta' and 1 omega subunit. When a sigma factor is associated with the core the holoenzyme is formed, which can initiate transcription. Mg(2+) serves as cofactor. Requires Zn(2+) as cofactor.

The catalysed reaction is RNA(n) + a ribonucleoside 5'-triphosphate = RNA(n+1) + diphosphate. In terms of biological role, DNA-dependent RNA polymerase catalyzes the transcription of DNA into RNA using the four ribonucleoside triphosphates as substrates. The polypeptide is DNA-directed RNA polymerase subunit beta' (Paraburkholderia phymatum (strain DSM 17167 / CIP 108236 / LMG 21445 / STM815) (Burkholderia phymatum)).